Reading from the N-terminus, the 183-residue chain is MTGNIVARRYAKALFALAKKAGKKAPAEYGKDLEAFASVLEGSPDLLKVFANPIISADVKKSVLSGVAGKIGLKPMVINFLSLLADKDRLPCVLEVSALYRTLLDEAEGVMRGQLVTAFALADARQDQIKVKLEKQSGKKLVLSFAVDPSIIGGVVLKVGDKVLDASLRAQLEILKEQIKRGE.

Belongs to the ATPase delta chain family. As to quaternary structure, F-type ATPases have 2 components, F(1) - the catalytic core - and F(0) - the membrane proton channel. F(1) has five subunits: alpha(3), beta(3), gamma(1), delta(1), epsilon(1). F(0) has three main subunits: a(1), b(2) and c(10-14). The alpha and beta chains form an alternating ring which encloses part of the gamma chain. F(1) is attached to F(0) by a central stalk formed by the gamma and epsilon chains, while a peripheral stalk is formed by the delta and b chains.

The protein localises to the cell inner membrane. Its function is as follows. F(1)F(0) ATP synthase produces ATP from ADP in the presence of a proton or sodium gradient. F-type ATPases consist of two structural domains, F(1) containing the extramembraneous catalytic core and F(0) containing the membrane proton channel, linked together by a central stalk and a peripheral stalk. During catalysis, ATP synthesis in the catalytic domain of F(1) is coupled via a rotary mechanism of the central stalk subunits to proton translocation. In terms of biological role, this protein is part of the stalk that links CF(0) to CF(1). It either transmits conformational changes from CF(0) to CF(1) or is implicated in proton conduction. This chain is ATP synthase subunit delta, found in Solidesulfovibrio magneticus (strain ATCC 700980 / DSM 13731 / RS-1) (Desulfovibrio magneticus).